Here is a 747-residue protein sequence, read N- to C-terminus: MQDDESSQIFMGPEGDQLPLVEMGSCKPEASDQWDCVLVADLQTLKIQKHAQKQLQFLENLESNGFHFKMLKDQKKVFFGIRADSDVIDKYRTLLMNPEDSGSRDEQSFNIATTRIRIVSFVVNNKLKPGDTFEDLVKDGVFETMFLLHKGEQNLKNIWARWRNMFEPQPIDEIREYFGEKVALYFTWLGWYTYMLVPAAVVGLIVFLSGFALFDSSQISKEICSANDIFMCPLGDHSHRYLRLSEMCTFAKLTHLFDNEGTVLFAIFMALWATVFLEIWKRKRAHEVQSWKLYEWDEEEEEMALELINSPHYKLKDHRHSYLSSTIILILSLFMICLMIGMAHVLVVYRVLAGALFSSLVKQQVTTAVVVTGAVVHYIIIVIMTKVNKYVALKLCKFEESGTFSEQERKFTVKFFILQFFAHFSSLIYIAFILGRINGHPGKSTRLAGLWKLEECHLSGCMMDLFIQMAIIMGLKQTLSNCVEYLCPLLAHKWRLMWASKHGHMSKDPELKEWQRNYYMNPINTFSLFDEFMEMMIQYGFTTIFVAAFPLAPLLALFSNLVEIRLDAIKMVRLQRRLVPRKAKDIGTWLQVLETIGVLAVIANGMVIAFTSEFIPRVVYKYHYGPCRTNRTFTDDCLTNYVNHSLSVFYTKHFNDHSRMEGQENVTVCRYRDYRNEHDYNLSEQFWFILAIRLTFVILFEHFALCIKLIAAWFVPDVPQKVKNEVLQEKYDRIRHRMRFSSRSTDV.

At 1 to 193 (MQDDESSQIF…LYFTWLGWYT (193 aa)) the chain is on the cytoplasmic side. The helical transmembrane segment at 194–214 (YMLVPAAVVGLIVFLSGFALF) threads the bilayer. Residues 215–259 (DSSQISKEICSANDIFMCPLGDHSHRYLRLSEMCTFAKLTHLFDN) lie on the Extracellular side of the membrane. The residue at position 245 (Ser-245) is a Phosphoserine; by PKA. The helical transmembrane segment at 260-280 (EGTVLFAIFMALWATVFLEIW) threads the bilayer. Topologically, residues 281 to 326 (KRKRAHEVQSWKLYEWDEEEEEMALELINSPHYKLKDHRHSYLSST) are cytoplasmic. The helical transmembrane segment at 327 to 347 (IILILSLFMICLMIGMAHVLV) threads the bilayer. The Extracellular segment spans residues 348–364 (VYRVLAGALFSSLVKQQ). Residues 365–385 (VTTAVVVTGAVVHYIIIVIMT) form a helical membrane-spanning segment. Residues 386–414 (KVNKYVALKLCKFEESGTFSEQERKFTVK) lie on the Cytoplasmic side of the membrane. The helical transmembrane segment at 415 to 435 (FFILQFFAHFSSLIYIAFILG) threads the bilayer. Topologically, residues 436–543 (RINGHPGKST…EMMIQYGFTT (108 aa)) are extracellular. The helical transmembrane segment at 544-564 (IFVAAFPLAPLLALFSNLVEI) threads the bilayer. At 565 to 595 (RLDAIKMVRLQRRLVPRKAKDIGTWLQVLET) the chain is on the cytoplasmic side. Residues 596–616 (IGVLAVIANGMVIAFTSEFIP) form a helical membrane-spanning segment. The Extracellular portion of the chain corresponds to 617-695 (RVVYKYHYGP…FWFILAIRLT (79 aa)). 4 N-linked (GlcNAc...) asparagine glycosylation sites follow: Asn-630, Asn-643, Asn-665, and Asn-681. Residues 696-716 (FVILFEHFALCIKLIAAWFVP) form a helical membrane-spanning segment. At 717 to 747 (DVPQKVKNEVLQEKYDRIRHRMRFSSRSTDV) the chain is on the cytoplasmic side.

Belongs to the anoctamin family. In terms of processing, phosphorylation on Ser-245 by cAMP-dependent protein kinase A (PKA)is essential for activation of its cation channel activity. Highly expressed in the olfactory epithelium, particularly in mature olfactory sensory neurons (at protein level). Expressed in the kidney (at protein level). Predominant expression seen in epithelial tissues. Highly expressed in the small intestine, colon and stomach.

The protein resides in the cell membrane. It localises to the endoplasmic reticulum. It carries out the reaction a 1,2-diacyl-sn-glycero-3-phospho-L-serine(in) = a 1,2-diacyl-sn-glycero-3-phospho-L-serine(out). The enzyme catalyses a beta-D-galactosyl-(1&lt;-&gt;1')-N-acylsphing-4-enine(out) = a beta-D-galactosyl-(1&lt;-&gt;1')-N-acylsphing-4-enine(in). The catalysed reaction is a 1,2-diacyl-sn-glycero-3-phosphocholine(in) = a 1,2-diacyl-sn-glycero-3-phosphocholine(out). It catalyses the reaction Ca(2+)(in) = Ca(2+)(out). It carries out the reaction Na(+)(in) = Na(+)(out). The enzyme catalyses K(+)(in) = K(+)(out). Cation channel activity is activated via phosphorylation on Ser-245 by cAMP-dependent protein kinase A (PKA). Inhibited by NaCl. Its function is as follows. PKA-activated nonselective cation channel. Discriminates poorly among cations but is more permeable to Ca(2+) ions than to monovalent cations. Acts as a calcium-activated calcium permeable channel which may operate as a endoplasmic reticulum (ER) Ca(2+)-leak channel, reducing the loading of the ER Ca(2+) store. Regulates intracellular Ca2+ signals, ion channel activity, and cytokine release in the renal tissue. Plays an important role in olfaction, amplifying cAMP-evoked cyclic nucleotide-gated (CNG) channel currents in the olfactory sensory neurons. Has calcium-dependent phospholipid scramblase activity; scrambles phosphatidylserine, phosphatidylcholine and galactosylceramide. Does not exhibit calcium-activated chloride channel (CaCC) activity. Can inhibit the activity of ANO1. This is Anoctamin-9 from Mus musculus (Mouse).